The chain runs to 240 residues: Chloroplastic group IIB intron splicing facilitator CRS2-B, chloroplastic (240 aa).

The protein belongs to the PTH family. CRS2 subfamily. Part of large ribonucleo-protein complexes that include group IIB introns and either CAF1 or CAF2.

The protein resides in the plastid. The protein localises to the chloroplast stroma. Functionally, required for the splicing of group IIB introns in chloroplasts. The sequence is that of Chloroplastic group IIB intron splicing facilitator CRS2-B, chloroplastic (CRS2B) from Arabidopsis thaliana (Mouse-ear cress).